The sequence spans 128 residues: Insulin-like 3 (128 aa).

Residues 1 to 15 (MHALLLLLLLALGSA) form the signal peptide. 3 cysteine pairs are disulfide-bonded: C29–C113, C41–C126, and C112–C117. Over residues 81–94 (ALDPDPALDPQLPH) the composition is skewed to low complexity. The tract at residues 81–101 (ALDPDPALDPQLPHQASQRQR) is disordered.

The protein belongs to the insulin family. In terms of assembly, heterodimer of a B chain and an A chain linked by two disulfide bonds. In terms of tissue distribution, expressed in Leydig cells of the testis, and weakly in the theca interna cells of antral follicles and the corpus luteum of the ovary.

Its subcellular location is the secreted. Its function is as follows. Seems to play a role in testicular function. May be a trophic hormone with a role in testicular descent in fetal life. Is a ligand for LGR8 receptor. The sequence is that of Insulin-like 3 (Insl3) from Rattus norvegicus (Rat).